Consider the following 665-residue polypeptide: Protein-arginine deiminase type-2 (665 aa).

Residues aspartate 123, aspartate 125, aspartate 127, valine 129, glutamate 131, asparagine 154, aspartate 156, glutamate 158, aspartate 166, aspartate 169, lysine 171, aspartate 177, aspartate 180, glutamate 354, aspartate 389, phenylalanine 408, leucine 411, and glutamate 412 each coordinate Ca(2+). Residue cysteine 647 is the Nucleophile of the active site.

This sequence belongs to the protein arginine deiminase family. As to quaternary structure, homodimer. Requires Ca(2+) as cofactor. As to expression, detected in keratinocytes in epidermis (at protein level).

The protein localises to the cytoplasm. It catalyses the reaction L-arginyl-[protein] + H2O = L-citrullyl-[protein] + NH4(+). Its function is as follows. Catalyzes the deimination of arginine residues of proteins. This is Protein-arginine deiminase type-2 (PADI2) from Homo sapiens (Human).